Consider the following 199-residue polypeptide: GTP cyclohydrolase-2 (199 aa).

49 to 53 (RIHSE) contacts GTP. Zn(2+)-binding residues include Cys54, Cys65, and Cys67. GTP-binding positions include Gln70, 92-94 (EGR), and Thr114. Asp126 (proton acceptor) is an active-site residue. The active-site Nucleophile is the Arg128. GTP is bound by residues Thr149 and Lys154. A disordered region spans residues 172–199 (ETGRNPHNSHYLETKRGKLGHLLEGDSE).

This sequence belongs to the GTP cyclohydrolase II family. Requires Zn(2+) as cofactor.

The catalysed reaction is GTP + 4 H2O = 2,5-diamino-6-hydroxy-4-(5-phosphoribosylamino)-pyrimidine + formate + 2 phosphate + 3 H(+). The protein operates within cofactor biosynthesis; riboflavin biosynthesis; 5-amino-6-(D-ribitylamino)uracil from GTP: step 1/4. Functionally, catalyzes the conversion of GTP to 2,5-diamino-6-ribosylamino-4(3H)-pyrimidinone 5'-phosphate (DARP), formate and pyrophosphate. In Teredinibacter turnerae (strain ATCC 39867 / T7901), this protein is GTP cyclohydrolase-2.